A 359-amino-acid chain; its full sequence is Fructose-like permease IIC component 2 (359 aa).

One can recognise a PTS EIIC type-2 domain in the interval 11 to 344 (TRQHLMTGVS…KSLARKNGSS (334 aa)). 9 consecutive transmembrane segments (helical) span residues 19-39 (VSHMIPFVVSGGILLAVSVML), 60-80 (IGVAGLTLMVPFLAAYIGYSI), 99-119 (FGAGFFGALIAGIIGGIVVHY), 135-155 (IFIIPIVGTLITAGIMMWGLG), 176-196 (SIVMLAVIMGLMLAFDMGGPV), 216-236 (VAIAAVGICIPPLGMGLATLI), 251-271 (AALVMGCVGVTEGAIPFAAAD), 290-310 (AALVGAQCYAGWGGLIVLPVV), and 314-334 (LGYIAAVAVGAVVTAVCVNVL).

Its subcellular location is the cell inner membrane. The phosphoenolpyruvate-dependent sugar phosphotransferase system (PTS), a major carbohydrate active -transport system, catalyzes the phosphorylation of incoming sugar substrates concomitant with their translocation across the cell membrane. This chain is Fructose-like permease IIC component 2 (frwC), found in Escherichia coli (strain K12).